The primary structure comprises 759 residues: NADP-dependent malic enzyme (759 aa).

Residues 1-428 form a malic enzyme region; that stretch reads MDEQLKQSAL…KLTEFVYKTN (428 aa). Catalysis depends on Y39, which acts as the Proton donor. K94 functions as the Proton acceptor in the catalytic mechanism. Residues E136, D137, and D162 each coordinate a divalent metal cation. NADP(+)-binding positions include 195-198, N288, and N320; that span reads AGAA. Residues 429 to 759 form a phosphate acetyltransferase region; sequence LFMKPIFSQA…AVVEAQTTPL (331 aa).

It in the N-terminal section; belongs to the malic enzymes family. The protein in the C-terminal section; belongs to the phosphate acetyltransferase and butyryltransferase family. It depends on Mg(2+) as a cofactor. Mn(2+) serves as cofactor.

It catalyses the reaction (S)-malate + NADP(+) = pyruvate + CO2 + NADPH. It carries out the reaction oxaloacetate + H(+) = pyruvate + CO2. This is NADP-dependent malic enzyme (maeB) from Salmonella typhimurium (strain LT2 / SGSC1412 / ATCC 700720).